The sequence spans 1122 residues: Desmoglein-2 (1122 aa).

The first 28 residues, 1-28, serve as a signal peptide directing secretion; it reads MARSPGDRCALLLLVQLLAVVCLDFGNG. The propeptide occupies 29–54; sequence LHLEVFSPRNEGKPFPKHTHLVRQKR. Cadherin domains lie at 55–164, 165–277, 278–398, and 397–504; these read AWIT…EPVF, TQEV…IPVV, ENKM…SSVV, and VVSF…CPVL. Residues 55 to 618 lie on the Extracellular side of the membrane; that stretch reads AWITAPVALR…YDNYVGLGPA (564 aa). N117 is a glycosylation site (N-linked (GlcNAc...) asparagine). 3 N-linked (GlcNAc...) asparagine glycosylation sites follow: N314, N467, and N519. A helical membrane pass occupies residues 619–639; that stretch reads AIALMILALLLLLLVPLLLLI. Topologically, residues 640–1122 are cytoplasmic; sequence CHCGGGAKGF…KHSTMQHSYS (483 aa). A phosphoserine mark is found at S685, S706, S709, and S729. Residue T808 is modified to Phosphothreonine. 3 positions are modified to phosphoserine: S810, S814, and S819. Desmoglein repeat repeat units follow at residues 885-916, 917-945, 946-971, 972-995, 996-1024, and 1025-1055; these read AYSSNTGFPAPKPLHEVHTEKVTQEIVTESSV, SSRQSQKVVPPPDPVASGNIIVTETSYAK, GSAVPPSTVLLAPRQPQSLIVTERVY, APTSTLVDQHYANEEKVLVTERVI, QPNGGIPKPLEVTQHLKDAQYVMVRERES, and ILAPSSGVQPTLAMPSVAAGGQNVTVTERIL. The disordered stretch occupies residues 913-932; sequence ESSVSSRQSQKVVPPPDPVA. The segment covering 914–924 has biased composition (low complexity); sequence SSVSSRQSQKV. A disordered region spans residues 1089 to 1122; that stretch reads LPNLDLEESDRPNSTITTSSTRVTKHSTMQHSYS. Residues 1100 to 1122 are compositionally biased toward polar residues; the sequence is PNSTITTSSTRVTKHSTMQHSYS. At S1122 the chain carries Phosphoserine.

As to quaternary structure, interacts with PKP2. Interacts with CTNNB1; the interaction promotes localization of CTNNB1 at cell junctions thus reducing its nuclear localization and subsequent transcription of CTNNB1/TCF-target genes. Post-translationally, palmitoylated by ZDHHC5 at the plasma membrane. In terms of tissue distribution, expressed in undifferentiated pluripotent stem cells, expression decreases during differentiation (at protein level). Expressed by embryonic stem cells, expression is reduced during differentiation (at protein level). Expressed at the apical-lateral cell membrane of kidney tubular epithelial cells (at protein level). Expressed in epidermis and heart (at protein level). Expressed in the brain, spleen, lung, liver skeletal muscle, kidney and testis.

Its subcellular location is the cell membrane. The protein resides in the cell junction. It localises to the desmosome. The protein localises to the cytoplasm. A component of desmosome cell-cell junctions which are required for positive regulation of cellular adhesion. Involved in the interaction of plaque proteins and intermediate filaments mediating cell-cell adhesion. Required for proliferation and viability of embryonic stem cells in the blastocyst, thereby crucial for progression of post-implantation embryonic development. Maintains pluripotency by regulating epithelial to mesenchymal transition/mesenchymal to epithelial transition (EMT/MET) via interacting with and sequestering CTNNB1 to sites of cell-cell contact, thereby reducing translocation of CTNNB1 to the nucleus and subsequent transcription of CTNNB1/TCF-target genes. Promotes pluripotency and the multi-lineage differentiation potential of hematopoietic stem cells. Plays a role in endothelial cell sprouting and elongation via mediating the junctional-association of cortical actin fibers and CDH5. Plays a role in limiting inflammatory infiltration and the apoptotic response to injury in kidney tubular epithelial cells, potentially via its role in maintaining cell-cell adhesion and the epithelial barrier. The chain is Desmoglein-2 (Dsg2) from Mus musculus (Mouse).